The sequence spans 173 residues: Adenine phosphoribosyltransferase (173 aa).

The protein belongs to the purine/pyrimidine phosphoribosyltransferase family. As to quaternary structure, homodimer.

The protein resides in the cytoplasm. The catalysed reaction is AMP + diphosphate = 5-phospho-alpha-D-ribose 1-diphosphate + adenine. It participates in purine metabolism; AMP biosynthesis via salvage pathway; AMP from adenine: step 1/1. In terms of biological role, catalyzes a salvage reaction resulting in the formation of AMP, that is energically less costly than de novo synthesis. The sequence is that of Adenine phosphoribosyltransferase from Thermoanaerobacter sp. (strain X514).